Here is a 74-residue protein sequence, read N- to C-terminus: Exodeoxyribonuclease 7 small subunit (74 aa).

Belongs to the XseB family. Heterooligomer composed of large and small subunits.

It is found in the cytoplasm. It catalyses the reaction Exonucleolytic cleavage in either 5'- to 3'- or 3'- to 5'-direction to yield nucleoside 5'-phosphates.. Functionally, bidirectionally degrades single-stranded DNA into large acid-insoluble oligonucleotides, which are then degraded further into small acid-soluble oligonucleotides. This Bdellovibrio bacteriovorus (strain ATCC 15356 / DSM 50701 / NCIMB 9529 / HD100) protein is Exodeoxyribonuclease 7 small subunit.